The sequence spans 571 residues: Proline--tRNA ligase (571 aa).

The protein belongs to the class-II aminoacyl-tRNA synthetase family. ProS type 1 subfamily. Homodimer.

The protein resides in the cytoplasm. The enzyme catalyses tRNA(Pro) + L-proline + ATP = L-prolyl-tRNA(Pro) + AMP + diphosphate. In terms of biological role, catalyzes the attachment of proline to tRNA(Pro) in a two-step reaction: proline is first activated by ATP to form Pro-AMP and then transferred to the acceptor end of tRNA(Pro). As ProRS can inadvertently accommodate and process non-cognate amino acids such as alanine and cysteine, to avoid such errors it has two additional distinct editing activities against alanine. One activity is designated as 'pretransfer' editing and involves the tRNA(Pro)-independent hydrolysis of activated Ala-AMP. The other activity is designated 'posttransfer' editing and involves deacylation of mischarged Ala-tRNA(Pro). The misacylated Cys-tRNA(Pro) is not edited by ProRS. The sequence is that of Proline--tRNA ligase from Pseudomonas entomophila (strain L48).